The sequence spans 329 residues: NADH-quinone oxidoreductase subunit H (329 aa).

8 helical membrane passes run 11-31, 81-101, 114-134, 154-174, 187-207, 238-258, 270-290, and 309-329; these read IVVA…CGAL, LIFT…FAVV, IGLL…LFAG, ISYE…TGSF, TWFI…GVAV, FFVG…TLFF, QLSF…FILL, and FCLP…LAAQ.

It belongs to the complex I subunit 1 family. As to quaternary structure, NDH-1 is composed of 13 different subunits. Subunits NuoA, H, J, K, L, M, N constitute the membrane sector of the complex.

It localises to the cell inner membrane. It carries out the reaction a quinone + NADH + 5 H(+)(in) = a quinol + NAD(+) + 4 H(+)(out). In terms of biological role, NDH-1 shuttles electrons from NADH, via FMN and iron-sulfur (Fe-S) centers, to quinones in the respiratory chain. The immediate electron acceptor for the enzyme in this species is believed to be ubiquinone. Couples the redox reaction to proton translocation (for every two electrons transferred, four hydrogen ions are translocated across the cytoplasmic membrane), and thus conserves the redox energy in a proton gradient. This subunit may bind ubiquinone. The polypeptide is NADH-quinone oxidoreductase subunit H (Azotobacter vinelandii (strain DJ / ATCC BAA-1303)).